A 311-amino-acid polypeptide reads, in one-letter code: 2-phospho-L-lactate transferase (311 aa).

2 residues coordinate 7,8-didemethyl-8-hydroxy-5-deazariboflavin: Asp52 and Arg91.

This sequence belongs to the CofD family. Homodimer. Mg(2+) is required as a cofactor.

It carries out the reaction (2S)-lactyl-2-diphospho-5'-guanosine + 7,8-didemethyl-8-hydroxy-5-deazariboflavin = oxidized coenzyme F420-0 + GMP + H(+). Its pathway is cofactor biosynthesis; coenzyme F420 biosynthesis. Its activity is regulated as follows. Inhibited by EDTA in vitro. Functionally, catalyzes the transfer of the 2-phospholactate moiety from (2S)-lactyl-2-diphospho-5'-guanosine to 7,8-didemethyl-8-hydroxy-5-deazariboflavin (FO) with the formation of oxidized coenzyme F420-0 and GMP. This is 2-phospho-L-lactate transferase from Methanocaldococcus jannaschii (strain ATCC 43067 / DSM 2661 / JAL-1 / JCM 10045 / NBRC 100440) (Methanococcus jannaschii).